Reading from the N-terminus, the 449-residue chain is Methionine aminopeptidase 2-2 (449 aa).

A disordered region spans residues M1 to P91. The span at N15 to A28 shows a compositional bias: polar residues. Residues D34–Q50 show a composition bias toward acidic residues. The segment covering K61–A75 has biased composition (basic residues). H199 is a binding site for substrate. Residues D219, D230, and H299 each contribute to the a divalent metal cation site. H307 contacts substrate. 2 residues coordinate a divalent metal cation: E335 and E430.

Belongs to the peptidase M24A family. Methionine aminopeptidase eukaryotic type 2 subfamily. It depends on Co(2+) as a cofactor. Zn(2+) serves as cofactor. The cofactor is Mn(2+). Requires Fe(2+) as cofactor.

Its subcellular location is the cytoplasm. The enzyme catalyses Release of N-terminal amino acids, preferentially methionine, from peptides and arylamides.. In terms of biological role, cotranslationally removes the N-terminal methionine from nascent proteins. The N-terminal methionine is often cleaved when the second residue in the primary sequence is small and uncharged (Met-Ala-, Cys, Gly, Pro, Ser, Thr, or Val). This is Methionine aminopeptidase 2-2 from Arthroderma gypseum (strain ATCC MYA-4604 / CBS 118893) (Microsporum gypseum).